A 123-amino-acid polypeptide reads, in one-letter code: Small ribosomal subunit protein uS12 (123 aa).

The residue at position 89 (D89) is a 3-methylthioaspartic acid.

Belongs to the universal ribosomal protein uS12 family. Part of the 30S ribosomal subunit. Contacts proteins S8 and S17. May interact with IF1 in the 30S initiation complex.

Its function is as follows. With S4 and S5 plays an important role in translational accuracy. In terms of biological role, interacts with and stabilizes bases of the 16S rRNA that are involved in tRNA selection in the A site and with the mRNA backbone. Located at the interface of the 30S and 50S subunits, it traverses the body of the 30S subunit contacting proteins on the other side and probably holding the rRNA structure together. The combined cluster of proteins S8, S12 and S17 appears to hold together the shoulder and platform of the 30S subunit. This Caulobacter vibrioides (strain ATCC 19089 / CIP 103742 / CB 15) (Caulobacter crescentus) protein is Small ribosomal subunit protein uS12.